The following is an 804-amino-acid chain: Leucine--tRNA ligase (804 aa).

The short motif at 40-51 is the 'HIGH' region element; that stretch reads PYPSGAGLHVGH. Positions 576–580 match the 'KMSKS' region motif; that stretch reads KMSKS. Lys579 contributes to the ATP binding site.

Belongs to the class-I aminoacyl-tRNA synthetase family.

The protein localises to the cytoplasm. It carries out the reaction tRNA(Leu) + L-leucine + ATP = L-leucyl-tRNA(Leu) + AMP + diphosphate. This Staphylococcus saprophyticus subsp. saprophyticus (strain ATCC 15305 / DSM 20229 / NCIMB 8711 / NCTC 7292 / S-41) protein is Leucine--tRNA ligase.